We begin with the raw amino-acid sequence, 383 residues long: Putative glutamate--cysteine ligase 2-1 (383 aa).

This sequence belongs to the glutamate--cysteine ligase type 2 family. YbdK subfamily.

The catalysed reaction is L-cysteine + L-glutamate + ATP = gamma-L-glutamyl-L-cysteine + ADP + phosphate + H(+). In terms of biological role, ATP-dependent carboxylate-amine ligase which exhibits weak glutamate--cysteine ligase activity. This Legionella pneumophila (strain Corby) protein is Putative glutamate--cysteine ligase 2-1.